A 356-amino-acid polypeptide reads, in one-letter code: Histidine biosynthesis bifunctional protein HisB (356 aa).

The segment at 1–166 (MSKKVLFIDR…AICNYLTSLN (166 aa)) is histidinol-phosphatase. D9 functions as the Nucleophile in the catalytic mechanism. Residues D9 and D11 each coordinate Mg(2+). The Proton donor role is filled by D11. C93, H95, C101, and C103 together coordinate Zn(2+). D130 is a binding site for Mg(2+). An imidazoleglycerol-phosphate dehydratase region spans residues 167 to 356 (RYAHVKRITK…VLPSSKGVLS (190 aa)).

It in the N-terminal section; belongs to the histidinol-phosphatase family. The protein in the C-terminal section; belongs to the imidazoleglycerol-phosphate dehydratase family. Mg(2+) serves as cofactor. The cofactor is Zn(2+).

Its subcellular location is the cytoplasm. It catalyses the reaction D-erythro-1-(imidazol-4-yl)glycerol 3-phosphate = 3-(imidazol-4-yl)-2-oxopropyl phosphate + H2O. The enzyme catalyses L-histidinol phosphate + H2O = L-histidinol + phosphate. It functions in the pathway amino-acid biosynthesis; L-histidine biosynthesis; L-histidine from 5-phospho-alpha-D-ribose 1-diphosphate: step 6/9. It participates in amino-acid biosynthesis; L-histidine biosynthesis; L-histidine from 5-phospho-alpha-D-ribose 1-diphosphate: step 8/9. The sequence is that of Histidine biosynthesis bifunctional protein HisB from Baumannia cicadellinicola subsp. Homalodisca coagulata.